A 715-amino-acid polypeptide reads, in one-letter code: MIPEDHLQYIRIGLASPEQIRSWAERRLPNGELIGRVSKPYTIHYQTHKPEKDGLFCERVFGPIKSGVCACGKYQGTISTKDSPKYCEKCGVEFTEARVRRHRMGYIDLQCPVTHVWYLKNRPSVIARLLNQPLQDIESLVYYDSFLARPVTNEPTLIRLLPTQSKLYKDRSQSTFDKPLELFLFDEPWQSALSNFFSPKWFHLIQIREMLTGADVIHKLLSGLNLTNAMFHARNQWKHLAKKAPESQSEVIEAQGPVPQAEEEKQRDQSIQQQKDAVLRRITLIRDLLQSQTQPEWMVLRTLPVLPPDLRPILELKDGQLIRSDLNELYRRVLYRNQLICQFSVEDPFCISMMQKKLLQQAIDSLLANGAGGNIIRDRNMRPYKSLSDIIKGKKGRFRENLLGKRVDYSGRSVIVVGPYLSLYQCGLPREMAIELFQPFVIRGLIINHFARNPRAAKSMIQRRHPIVWKILKMIVDDHLVILNRAPTLHRLGVQAFQPVLVRERAIHLHPLVCTGFNADFDGDQMAVHVPLSLEAQAEAHLLMSPYFNLLSPGTGDAIVVPTQDMLLGLYALTLGATLGIYSNINTYKYQSDVSFTQKTDSKIITFSNFSDALTAYHQGIITSDLPIWLYCRPEIAVMNNSQGDCPVEAQYQPKGIYLNVYEHSQIRTDKLGKTVQKYIRTTAGRAVLNQQIEQAIQGTEHAYKAVKQLNIILN.

Zn(2+) contacts are provided by C69, C71, C87, and C90. The interval 244-272 (APESQSEVIEAQGPVPQAEEEKQRDQSIQ) is disordered. Mg(2+) contacts are provided by D520, D522, and D524.

The protein belongs to the RNA polymerase beta' chain family. RpoC1 subfamily. In terms of assembly, in plastids the minimal PEP RNA polymerase catalytic core is composed of four subunits: alpha, beta, beta', and beta''. When a (nuclear-encoded) sigma factor is associated with the core the holoenzyme is formed, which can initiate transcription. Requires Mg(2+) as cofactor. The cofactor is Zn(2+).

Its subcellular location is the plastid. It is found in the chloroplast. It carries out the reaction RNA(n) + a ribonucleoside 5'-triphosphate = RNA(n+1) + diphosphate. DNA-dependent RNA polymerase catalyzes the transcription of DNA into RNA using the four ribonucleoside triphosphates as substrates. This Zygnema circumcarinatum (Green alga) protein is DNA-directed RNA polymerase subunit beta'.